Here is a 134-residue protein sequence, read N- to C-terminus: ATP synthase epsilon chain (134 aa).

Belongs to the ATPase epsilon chain family. In terms of assembly, F-type ATPases have 2 components, CF(1) - the catalytic core - and CF(0) - the membrane proton channel. CF(1) has five subunits: alpha(3), beta(3), gamma(1), delta(1), epsilon(1). CF(0) has three main subunits: a, b and c.

The protein localises to the cell membrane. Produces ATP from ADP in the presence of a proton gradient across the membrane. This is ATP synthase epsilon chain from Alkaliphilus oremlandii (strain OhILAs) (Clostridium oremlandii (strain OhILAs)).